We begin with the raw amino-acid sequence, 370 residues long: Holliday junction branch migration complex subunit RuvB 2 (370 aa).

The disordered stretch occupies residues 1–54 (MAIISSRAAGAEDPGQRQQKSSARRRESKLAFARAEGLLQPQAHPSEAQEESLR). The tract at residues 13–214 (DPGQRQQKSS…FGQVQRLRFY (202 aa)) is large ATPase domain (RuvB-L). Residues Leu53, Arg54, Gly95, Lys98, Thr99, Thr100, 161 to 163 (EDF), Arg204, Tyr214, and Arg251 contribute to the ATP site. Thr99 contacts Mg(2+). The tract at residues 215–285 (EPHELAEIVL…VAAAALELFQ (71 aa)) is small ATPAse domain (RuvB-S). The segment at 288–370 (PMGLDWTDRK…TAQSPLPVWS (83 aa)) is head domain (RuvB-H). Positions 343 and 348 each coordinate DNA.

The protein belongs to the RuvB family. In terms of assembly, homohexamer. Forms an RuvA(8)-RuvB(12)-Holliday junction (HJ) complex. HJ DNA is sandwiched between 2 RuvA tetramers; dsDNA enters through RuvA and exits via RuvB. An RuvB hexamer assembles on each DNA strand where it exits the tetramer. Each RuvB hexamer is contacted by two RuvA subunits (via domain III) on 2 adjacent RuvB subunits; this complex drives branch migration. In the full resolvosome a probable DNA-RuvA(4)-RuvB(12)-RuvC(2) complex forms which resolves the HJ.

Its subcellular location is the cytoplasm. The catalysed reaction is ATP + H2O = ADP + phosphate + H(+). Its function is as follows. The RuvA-RuvB-RuvC complex processes Holliday junction (HJ) DNA during genetic recombination and DNA repair, while the RuvA-RuvB complex plays an important role in the rescue of blocked DNA replication forks via replication fork reversal (RFR). RuvA specifically binds to HJ cruciform DNA, conferring on it an open structure. The RuvB hexamer acts as an ATP-dependent pump, pulling dsDNA into and through the RuvAB complex. RuvB forms 2 homohexamers on either side of HJ DNA bound by 1 or 2 RuvA tetramers; 4 subunits per hexamer contact DNA at a time. Coordinated motions by a converter formed by DNA-disengaged RuvB subunits stimulates ATP hydrolysis and nucleotide exchange. Immobilization of the converter enables RuvB to convert the ATP-contained energy into a lever motion, pulling 2 nucleotides of DNA out of the RuvA tetramer per ATP hydrolyzed, thus driving DNA branch migration. The RuvB motors rotate together with the DNA substrate, which together with the progressing nucleotide cycle form the mechanistic basis for DNA recombination by continuous HJ branch migration. Branch migration allows RuvC to scan DNA until it finds its consensus sequence, where it cleaves and resolves cruciform DNA. In Synechococcus sp. (strain JA-3-3Ab) (Cyanobacteria bacterium Yellowstone A-Prime), this protein is Holliday junction branch migration complex subunit RuvB 2.